The chain runs to 159 residues: Phosphopantetheine adenylyltransferase (159 aa).

ATP is bound at residue His-16. Substrate contacts are provided by Lys-40, Met-72, and Arg-86. ATP is bound by residues 87 to 89 (GLR), Glu-97, and 122 to 128 (YQYLSAS).

It belongs to the bacterial CoaD family. In terms of assembly, homohexamer. Mg(2+) serves as cofactor.

It localises to the cytoplasm. It catalyses the reaction (R)-4'-phosphopantetheine + ATP + H(+) = 3'-dephospho-CoA + diphosphate. The protein operates within cofactor biosynthesis; coenzyme A biosynthesis; CoA from (R)-pantothenate: step 4/5. Functionally, reversibly transfers an adenylyl group from ATP to 4'-phosphopantetheine, yielding dephospho-CoA (dPCoA) and pyrophosphate. The polypeptide is Phosphopantetheine adenylyltransferase (Dehalococcoides mccartyi (strain CBDB1)).